Reading from the N-terminus, the 289-residue chain is uncharacterized protein (289 aa).

Transmembrane regions (helical) follow at residues 13–32 (INFA…LSGS), 37–59 (LIIS…HLND), 80–99 (IVTE…IFFI), 104–121 (EIAL…WLYS), 141–160 (VFTY…TIFS), 165–183 (VGVV…GFFL), 203–225 (VLSP…FVVI), 235–252 (TSSL…FAIY), and 265–287 (IISS…AIGC).

The protein localises to the cell membrane. This is an uncharacterized protein from Archaeoglobus fulgidus (strain ATCC 49558 / DSM 4304 / JCM 9628 / NBRC 100126 / VC-16).